A 155-amino-acid chain; its full sequence is Ribosomal RNA large subunit methyltransferase H (155 aa).

S-adenosyl-L-methionine contacts are provided by residues L72, G103, and L122–F127.

Belongs to the RNA methyltransferase RlmH family. In terms of assembly, homodimer.

The protein localises to the cytoplasm. It catalyses the reaction pseudouridine(1915) in 23S rRNA + S-adenosyl-L-methionine = N(3)-methylpseudouridine(1915) in 23S rRNA + S-adenosyl-L-homocysteine + H(+). Its function is as follows. Specifically methylates the pseudouridine at position 1915 (m3Psi1915) in 23S rRNA. In Alkalilimnicola ehrlichii (strain ATCC BAA-1101 / DSM 17681 / MLHE-1), this protein is Ribosomal RNA large subunit methyltransferase H.